Reading from the N-terminus, the 258-residue chain is Ribonuclease PH (258 aa).

Phosphate-binding positions include arginine 88 and 126 to 128 (GTR).

Belongs to the RNase PH family. As to quaternary structure, homohexameric ring arranged as a trimer of dimers.

It catalyses the reaction tRNA(n+1) + phosphate = tRNA(n) + a ribonucleoside 5'-diphosphate. Its function is as follows. Phosphorolytic 3'-5' exoribonuclease that plays an important role in tRNA 3'-end maturation. Removes nucleotide residues following the 3'-CCA terminus of tRNAs; can also add nucleotides to the ends of RNA molecules by using nucleoside diphosphates as substrates, but this may not be physiologically important. Probably plays a role in initiation of 16S rRNA degradation (leading to ribosome degradation) during starvation. The polypeptide is Ribonuclease PH (Mycobacteroides abscessus (strain ATCC 19977 / DSM 44196 / CCUG 20993 / CIP 104536 / JCM 13569 / NCTC 13031 / TMC 1543 / L948) (Mycobacterium abscessus)).